Reading from the N-terminus, the 642-residue chain is Assimilatory sulfite reductase (ferredoxin), chloroplastic (642 aa).

Residues 1–61 (MSSTFRAPAG…SSSSSSPIQA (61 aa)) constitute a chloroplast transit peptide. A disordered region spans residues 46-74 (PVPPSASSSSSSPIQAVSTPAKPETATKR). [4Fe-4S] cluster is bound by residues Cys503, Cys509, Cys549, and Cys553. Cys553 is a siroheme binding site.

The protein belongs to the nitrite and sulfite reductase 4Fe-4S domain family. Monomer. Interacts with ferredoxin. Siroheme is required as a cofactor. The cofactor is [4Fe-4S] cluster. In terms of processing, phosphorylated; this phosphorylation reduces DNA-binding. As to expression, present in leaves and roots.

It localises to the plastid. The protein resides in the chloroplast stroma. Its subcellular location is the chloroplast nucleoid. The protein localises to the plastid stroma. It carries out the reaction hydrogen sulfide + 6 oxidized [2Fe-2S]-[ferredoxin] + 3 H2O = sulfite + 6 reduced [2Fe-2S]-[ferredoxin] + 7 H(+). Essential protein with sulfite reductase activity required in assimilatory sulfate reduction pathway during both primary and secondary metabolism and thus involved in development and growth. Functionally, DNA-binding protein that binds to both double-stranded and single-stranded DNA without significant sequence specificity to reversibly repress the transcriptional activity of chloroplast nucleoids by promoting DNA compaction and possibly regulate DNA replication. The protein is Assimilatory sulfite reductase (ferredoxin), chloroplastic (SIR) of Arabidopsis thaliana (Mouse-ear cress).